Consider the following 134-residue polypeptide: Small ribosomal subunit protein uS11 (134 aa).

It belongs to the universal ribosomal protein uS11 family. As to quaternary structure, part of the 30S ribosomal subunit. Interacts with proteins S7 and S18. Binds to IF-3.

Functionally, located on the platform of the 30S subunit, it bridges several disparate RNA helices of the 16S rRNA. Forms part of the Shine-Dalgarno cleft in the 70S ribosome. The polypeptide is Small ribosomal subunit protein uS11 (Corynebacterium diphtheriae (strain ATCC 700971 / NCTC 13129 / Biotype gravis)).